The sequence spans 306 residues: Recombination-associated protein RdgC (306 aa).

Belongs to the RdgC family.

The protein localises to the cytoplasm. It localises to the nucleoid. Functionally, may be involved in recombination. This chain is Recombination-associated protein RdgC, found in Pseudomonas fluorescens (strain SBW25).